The primary structure comprises 1072 residues: Carbamoyl phosphate synthase large chain (1072 aa).

Residues 1–401 (MPKRLDINTI…SLLKAVRSLE (401 aa)) are carboxyphosphate synthetic domain. ATP-binding residues include Arg129, Arg169, Gly175, Gly176, Lys208, Ile210, Glu215, Gly241, Val242, His243, Gln284, and Glu298. The ATP-grasp 1 domain maps to 133-327 (RTLMQELNEP…IAKLAAKIAV (195 aa)). Residues Gln284, Glu298, and Asn300 each coordinate Mg(2+). Residues Gln284, Glu298, and Asn300 each coordinate Mn(2+). The oligomerization domain stretch occupies residues 402 to 546 (LGIYHLELDH…YSTYADENES (145 aa)). Residues 547-929 (IVTDRKSVVV…ALYKGLVASG (383 aa)) are carbamoyl phosphate synthetic domain. The ATP-grasp 2 domain maps to 671–861 (EAALTKLGIP…MANVATKVIL (191 aa)). Residues Arg707, Arg746, Glu752, Gly777, Val778, His779, Ser780, Gln820, and Glu832 each coordinate ATP. Mg(2+) is bound by residues Gln820, Glu832, and Asn834. Residues Gln820, Glu832, and Asn834 each contribute to the Mn(2+) site. An MGS-like domain is found at 930-1072 (INIPTHGSVI…QTKRHEVVHA (143 aa)). Residues 930–1072 (INIPTHGSVI…QTKRHEVVHA (143 aa)) form an allosteric domain region.

It belongs to the CarB family. As to quaternary structure, composed of two chains; the small (or glutamine) chain promotes the hydrolysis of glutamine to ammonia, which is used by the large (or ammonia) chain to synthesize carbamoyl phosphate. Tetramer of heterodimers (alpha,beta)4. It depends on Mg(2+) as a cofactor. The cofactor is Mn(2+).

The enzyme catalyses hydrogencarbonate + L-glutamine + 2 ATP + H2O = carbamoyl phosphate + L-glutamate + 2 ADP + phosphate + 2 H(+). It carries out the reaction hydrogencarbonate + NH4(+) + 2 ATP = carbamoyl phosphate + 2 ADP + phosphate + 2 H(+). Its pathway is amino-acid biosynthesis; L-arginine biosynthesis; carbamoyl phosphate from bicarbonate: step 1/1. It functions in the pathway pyrimidine metabolism; UMP biosynthesis via de novo pathway; (S)-dihydroorotate from bicarbonate: step 1/3. In terms of biological role, large subunit of the glutamine-dependent carbamoyl phosphate synthetase (CPSase). CPSase catalyzes the formation of carbamoyl phosphate from the ammonia moiety of glutamine, carbonate, and phosphate donated by ATP, constituting the first step of 2 biosynthetic pathways, one leading to arginine and/or urea and the other to pyrimidine nucleotides. The large subunit (synthetase) binds the substrates ammonia (free or transferred from glutamine from the small subunit), hydrogencarbonate and ATP and carries out an ATP-coupled ligase reaction, activating hydrogencarbonate by forming carboxy phosphate which reacts with ammonia to form carbamoyl phosphate. This chain is Carbamoyl phosphate synthase large chain, found in Bacillus thuringiensis (strain Al Hakam).